The following is a 445-amino-acid chain: Xylose isomerase (445 aa).

Residues histidine 107 and aspartate 110 contribute to the active site. Mg(2+)-binding residues include glutamate 238, glutamate 274, histidine 277, aspartate 302, aspartate 313, aspartate 315, and aspartate 345.

It belongs to the xylose isomerase family. In terms of assembly, homotetramer. The cofactor is Mg(2+).

It is found in the cytoplasm. It carries out the reaction alpha-D-xylose = alpha-D-xylulofuranose. The chain is Xylose isomerase from Bacillus pumilus (strain SAFR-032).